The primary structure comprises 590 residues: Mitochondrial distribution and morphology protein 34 (590 aa).

The SMP-LTD domain maps to 1–225; it reads MSFIFNRETF…LPSVIFNMSQ (225 aa). Positions 393 to 405 are enriched in basic residues; that stretch reads RRKIKMRSRKPSK. Residues 393 to 456 are disordered; sequence RRKIKMRSRK…APEGGPNAED (64 aa). Residues 413 to 427 show a composition bias toward polar residues; it reads PAQNDSGTSSCSNVA.

Belongs to the MDM34 family. Component of the ER-mitochondria encounter structure (ERMES) or MDM complex, composed of MMM1, MDM10, MDM12 and MDM34.

It is found in the mitochondrion outer membrane. In terms of biological role, component of the ERMES/MDM complex, which serves as a molecular tether to connect the endoplasmic reticulum (ER) and mitochondria. Components of this complex are involved in the control of mitochondrial shape and protein biogenesis, and function in nonvesicular lipid trafficking between the ER and mitochondria. MDM34 is required for the interaction of the ER-resident membrane protein MMM1 and the outer mitochondrial membrane-resident beta-barrel protein MDM10. The chain is Mitochondrial distribution and morphology protein 34 from Eremothecium gossypii (strain ATCC 10895 / CBS 109.51 / FGSC 9923 / NRRL Y-1056) (Yeast).